We begin with the raw amino-acid sequence, 253 residues long: Triosephosphate isomerase, cytosolic (253 aa).

N10 and K12 together coordinate substrate. H96 serves as the catalytic Electrophile. Catalysis depends on E166, which acts as the Proton acceptor.

It belongs to the triosephosphate isomerase family. As to quaternary structure, homodimer.

It is found in the cytoplasm. It catalyses the reaction D-glyceraldehyde 3-phosphate = dihydroxyacetone phosphate. It functions in the pathway carbohydrate biosynthesis; gluconeogenesis. It participates in carbohydrate degradation; glycolysis; D-glyceraldehyde 3-phosphate from glycerone phosphate: step 1/1. The sequence is that of Triosephosphate isomerase, cytosolic (TPI) from Oryza sativa subsp. japonica (Rice).